Consider the following 227-residue polypeptide: Uracil phosphoribosyltransferase (227 aa).

Residue 36 to 40 (KGLVK) participates in GTP binding. Residues R86, R111, and 145-153 (DPMLATGST) each bind 5-phospho-alpha-D-ribose 1-diphosphate. Residues I212 and 217 to 219 (GDA) each bind uracil. A 5-phospho-alpha-D-ribose 1-diphosphate-binding site is contributed by D218.

Belongs to the UPRTase family. Requires Mg(2+) as cofactor.

It catalyses the reaction UMP + diphosphate = 5-phospho-alpha-D-ribose 1-diphosphate + uracil. It participates in pyrimidine metabolism; UMP biosynthesis via salvage pathway; UMP from uracil: step 1/1. Allosterically activated by GTP. Functionally, catalyzes the conversion of uracil and 5-phospho-alpha-D-ribose 1-diphosphate (PRPP) to UMP and diphosphate. In Halobacterium salinarum (strain ATCC 700922 / JCM 11081 / NRC-1) (Halobacterium halobium), this protein is Uracil phosphoribosyltransferase.